The chain runs to 87 residues: UPF0250 protein Spro_1197 (87 aa).

The protein belongs to the UPF0250 family.

The sequence is that of UPF0250 protein Spro_1197 from Serratia proteamaculans (strain 568).